A 1219-amino-acid chain; its full sequence is NHS-like protein 2 (1219 aa).

Disordered stretches follow at residues 162 to 181, 288 to 321, 336 to 364, 400 to 423, 474 to 591, 669 to 741, 854 to 938, 979 to 1003, 1033 to 1087, and 1121 to 1197; these read FRSS…QSAK, FSNF…HSAP, FPSL…SDHP, TPSA…GNSW, GLLA…ELVL, QGSS…SASV, GAEE…STAS, IGLQ…KKPS, LEED…DKTA, and WKET…KTTN. Residues 288-312 are compositionally biased toward polar residues; sequence FSNFSQRDQGHSSSPTGSLARSATS. Residues 352–364 are compositionally biased toward basic and acidic residues; it reads GDAHQARSASDHP. Residue Ser499 is modified to Phosphoserine. Polar residues predominate over residues 526-545; the sequence is ASTSSEGSNSTDNIAALSTE. Residues 549–567 show a composition bias toward basic residues; it reads RHRRQRSKSISLKKAKKKP. Ser575 is modified (phosphoserine). The span at 674–687 shows a compositional bias: low complexity; it reads SLASPSTSRATTPS. Residue Ser690 is modified to Phosphoserine. Composition is skewed to polar residues over residues 708–729 and 897–908; these read MSPS…SMSL and TSPTMAMASRSS. At Ser1048 the chain carries Phosphoserine. Basic and acidic residues predominate over residues 1076–1087; sequence AEEKSLISDKTA. Positions 1131–1144 are enriched in polar residues; sequence SKPSSHSPVKNTAD. Low complexity predominate over residues 1145 to 1160; it reads SPTGEAAAAPGPSSSA. Phosphoserine is present on Ser1208.

It belongs to the NHS family.

This chain is NHS-like protein 2, found in Mus musculus (Mouse).